The chain runs to 653 residues: Protease 1 (653 aa).

The segment at residues 1-20 (MKRICGSLLLLGLSISAALA) is a signal peptide (or 27). Positions 21–205 (APASRPAAFD…RRLAAASGEK (185 aa)) are excised as a propeptide. 3 disulfides stabilise this stretch: C211-C421, C217-C285, and C241-C263. Residues H262, D318, and S399 each act as charge relay system in the active site. The PKD domain occupies 474–553 (NTPPVANFTS…TNTKTGSVTV (80 aa)). Residues 474 to 653 (NTPPVANFTS…AAQRAPGSCG (180 aa)) constitute a propeptide, thr/Ser-rich. Residues 555 to 653 (GGPGAQTYTN…AAQRAPGSCG (99 aa)) form the P/Homo B domain.

It belongs to the peptidase S1 family. Post-translationally, three disulfide bonds are present.

The protein resides in the secreted. The catalysed reaction is Preferential cleavage: Lys-|-Xaa, including Lys-|-Pro.. The sequence is that of Protease 1 from Achromobacter lyticus.